Here is a 116-residue protein sequence, read N- to C-terminus: Protein lin-52 homolog (116 aa).

Phosphoserine occurs at positions 28 and 53.

The protein belongs to the lin-52 family. As to quaternary structure, component of the DREAM complex (also named LINC complex) at least composed of E2F4, E2F5, LIN9, LIN37, LIN52, LIN54, MYBL1, MYBL2, RBL1, RBL2, RBBP4, TFDP1 and TFDP2. The complex exists in quiescent cells where it represses cell cycle-dependent genes. It dissociates in S phase when LIN9, LIN37, LIN52 and LIN54 form a subcomplex that binds to MYBL2.

The protein is Protein lin-52 homolog (LIN52) of Homo sapiens (Human).